The chain runs to 1157 residues: ATP-dependent helicase/deoxyribonuclease subunit B (1157 aa).

The UvrD-like helicase ATP-binding domain maps to 1–277 (MTLQIIAGKS…KLFLENKRAK (277 aa)). Position 8 to 15 (8 to 15 (GKSGTGKT)) interacts with ATP. Residues 272–578 (ENKRAKSDSL…EFSLLPPSLD (307 aa)) enclose the UvrD-like helicase C-terminal domain. [4Fe-4S] cluster is bound by residues C794, C1115, C1118, and C1124.

Belongs to the helicase family. AddB/RexB type 1 subfamily. As to quaternary structure, heterodimer of AddA and AddB. The cofactor is Mg(2+). [4Fe-4S] cluster is required as a cofactor.

The heterodimer acts as both an ATP-dependent DNA helicase and an ATP-dependent, dual-direction single-stranded exonuclease. Recognizes the chi site generating a DNA molecule suitable for the initiation of homologous recombination. The AddB subunit has 5' -&gt; 3' nuclease activity but not helicase activity. The protein is ATP-dependent helicase/deoxyribonuclease subunit B of Listeria welshimeri serovar 6b (strain ATCC 35897 / DSM 20650 / CCUG 15529 / CIP 8149 / NCTC 11857 / SLCC 5334 / V8).